The sequence spans 274 residues: MVGPGLYPEIGKKARDLLYRDYQTDHKFTLTTYTSNGVAITATSTKKADLIFGEIQSQIKNKNITVDVKANSDSNVVTTVTVDELTPGLKSILSFAVPDQRSGKFELQYSHDYAGVSASIGLTASPVVNLSSVFGTKALAVGADVSLDTATGNLTKYNAGLSFSNDDLIASLNLNNKGDSLTASYYHIVNHSATAVGAELTHSFSSNENSLTFGTQHTLDPLTVVKARFNNSGKASALLQHEWRPKSVWTISAEVDTKAIDKSSKVGIAVALKP.

Belongs to the eukaryotic mitochondrial porin (TC 1.B.8.1) family. In terms of tissue distribution, expressed in shoots and roots. Also expressed in callus, leaves, panicles, sheaths and stems.

The protein localises to the mitochondrion outer membrane. Its function is as follows. Forms a channel through the mitochondrial outer membrane that allows diffusion of small hydrophilic molecules. The channel adopts an open conformation at low or zero membrane potential and a closed conformation at potentials above 30-40 mV. The open state has a weak anion selectivity whereas the closed state is cation-selective. The chain is Mitochondrial outer membrane protein porin 1 (VDAC1) from Oryza sativa subsp. japonica (Rice).